We begin with the raw amino-acid sequence, 434 residues long: D-amino acid dehydrogenase (434 aa).

3–17 (VVILGSGVVGVTSAW) contacts FAD.

Belongs to the DadA oxidoreductase family. The cofactor is FAD.

It catalyses the reaction a D-alpha-amino acid + A + H2O = a 2-oxocarboxylate + AH2 + NH4(+). The protein operates within amino-acid degradation; D-alanine degradation; NH(3) and pyruvate from D-alanine: step 1/1. In terms of biological role, oxidative deamination of D-amino acids. This is D-amino acid dehydrogenase from Yersinia pseudotuberculosis serotype O:1b (strain IP 31758).